A 254-amino-acid polypeptide reads, in one-letter code: Probable triosephosphate isomerase 2 (254 aa).

9 to 11 provides a ligand contact to substrate; that stretch reads NMK. The Electrophile role is filled by H96. Catalysis depends on E168, which acts as the Proton acceptor. The substrate site is built by G174 and S212.

It belongs to the triosephosphate isomerase family. In terms of assembly, homodimer.

It is found in the cytoplasm. It carries out the reaction D-glyceraldehyde 3-phosphate = dihydroxyacetone phosphate. The protein operates within carbohydrate biosynthesis; gluconeogenesis. It functions in the pathway carbohydrate degradation; glycolysis; D-glyceraldehyde 3-phosphate from glycerone phosphate: step 1/1. Its function is as follows. Involved in the gluconeogenesis. Catalyzes stereospecifically the conversion of dihydroxyacetone phosphate (DHAP) to D-glyceraldehyde-3-phosphate (G3P). In Listeria monocytogenes serovar 1/2a (strain ATCC BAA-679 / EGD-e), this protein is Probable triosephosphate isomerase 2.